A 335-amino-acid chain; its full sequence is DNA-directed RNA polymerase subunit alpha (335 aa).

Positions 1 to 233 (MTAVNDFLTP…QQIAVFVDLE (233 aa)) are alpha N-terminal domain (alpha-NTD). An alpha C-terminal domain (alpha-CTD) region spans residues 247 to 335 (IDPILLRPVD…DDDRLNAKLR (89 aa)).

Belongs to the RNA polymerase alpha chain family. In terms of assembly, homodimer. The RNAP catalytic core consists of 2 alpha, 1 beta, 1 beta' and 1 omega subunit. When a sigma factor is associated with the core the holoenzyme is formed, which can initiate transcription.

It carries out the reaction RNA(n) + a ribonucleoside 5'-triphosphate = RNA(n+1) + diphosphate. Functionally, DNA-dependent RNA polymerase catalyzes the transcription of DNA into RNA using the four ribonucleoside triphosphates as substrates. The sequence is that of DNA-directed RNA polymerase subunit alpha from Alcanivorax borkumensis (strain ATCC 700651 / DSM 11573 / NCIMB 13689 / SK2).